Consider the following 556-residue polypeptide: Formate--tetrahydrofolate ligase (556 aa).

65–72 (TPAGEGKS) is an ATP binding site.

This sequence belongs to the formate--tetrahydrofolate ligase family.

The catalysed reaction is (6S)-5,6,7,8-tetrahydrofolate + formate + ATP = (6R)-10-formyltetrahydrofolate + ADP + phosphate. It functions in the pathway one-carbon metabolism; tetrahydrofolate interconversion. This Streptococcus thermophilus (strain ATCC BAA-491 / LMD-9) protein is Formate--tetrahydrofolate ligase.